Reading from the N-terminus, the 462-residue chain is MVEQTTSEPAAGSMPKISFGVKKREENKVQAPAKAVVIEVDLDSDEEREKNEMERAAKRRKVMHFEDGTVQGDIDKPKEAAVIPMVVEHDWRTQKLIEKEKAGTLTEEERAKLALVLPNGIDGENEEESGKGEKIVVEDGRGDTEDADYSAIPIESFGLAILRGCNWKDGDGIGKNPQKVALKLPNRRPPGLGLGATPKNPVGKNKNTGESSKAEEEKLEEIKVGSFIKVVDGRNKGVYGKVEGRDDDSNSLFIRTAIGGKTMKVSQIVAVAVSAKEYERDSKCLNKSEYDKEKDRLETERKKLESQPPSTSTSQSSKDYKSKSSSSKHDKNSSEYERNDKMWARTDLLVRFIDEDFKRGSLYEQKVRIVDVAGDNDVTIEDDRGNTHYNIRQSWLETVIPREIGEKLMIVAGKRSGQLAVMLDKDKRKEKVTARLVATNDVVTAYFEDVCSVKIRHEEDYE.

2 disordered regions span residues 1–26 and 182–218; these read MVEQ…KREE and LKLP…EEEK. Residues 154 to 202 form the G-patch domain; the sequence is IESFGLAILRGCNWKDGDGIGKNPQKVALKLPNRRPPGLGLGATPKNPV. One can recognise a KOW 1 domain in the interval 221 to 248; the sequence is EIKVGSFIKVVDGRNKGVYGKVEGRDDD. Positions 289–305 are enriched in basic and acidic residues; that stretch reads EYDKEKDRLETERKKLE. Positions 289-337 are disordered; it reads EYDKEKDRLETERKKLESQPPSTSTSQSSKDYKSKSSSSKHDKNSSEYE. The span at 306–317 shows a compositional bias: low complexity; sequence SQPPSTSTSQSS. Positions 318–337 are enriched in basic and acidic residues; it reads KDYKSKSSSSKHDKNSSEYE. A KOW 2 domain is found at 401-428; sequence PREIGEKLMIVAGKRSGQLAVMLDKDKR.

The protein belongs to the MOS2 family.

Its subcellular location is the nucleus. The chain is G-patch domain and KOW motifs-containing protein homolog 1 from Caenorhabditis elegans.